Here is a 628-residue protein sequence, read N- to C-terminus: DNA mismatch repair protein MutL (628 aa).

The segment at 350-402 is disordered; the sequence is GLPFDVSESQGNDNHINNGKSRETKSERELYERRPNPFENRLMKESNSPSVGK. Residues 356–368 are compositionally biased toward polar residues; it reads SESQGNDNHINNG. Over residues 369 to 393 the composition is skewed to basic and acidic residues; sequence KSRETKSERELYERRPNPFENRLMK.

This sequence belongs to the DNA mismatch repair MutL/HexB family.

In terms of biological role, this protein is involved in the repair of mismatches in DNA. It is required for dam-dependent methyl-directed DNA mismatch repair. May act as a 'molecular matchmaker', a protein that promotes the formation of a stable complex between two or more DNA-binding proteins in an ATP-dependent manner without itself being part of a final effector complex. This Wolbachia sp. subsp. Brugia malayi (strain TRS) protein is DNA mismatch repair protein MutL.